Here is a 315-residue protein sequence, read N- to C-terminus: THO complex subunit 3 (315 aa).

WD repeat units follow at residues 18–57 (GHKK…HSKA), 64–104 (GHTD…CTQQ), 106–145 (ELSG…PLHR), 189–228 (AHTA…CLRT), 231–270 (KLEW…TVHQ), and 272–311 (PCRA…RIFG).

Belongs to the THOC3 family. Component of the THO complex, which is composed of THO1, THO2, THO3, THO5, THO6 and THO7.

The protein localises to the nucleus. In terms of biological role, acts as a component of the THO subcomplex of the TREX complex which is thought to couple mRNA transcription, processing and nuclear export. Contributes to the integrity of the endogenous trans-acting small interfering RNA (ta-siRNA) pathway. May process or transport a long RNA molecule so that it can be a template for secondary siRNA production. May participate in the trafficking of siRNA precursors to the ARGONAUTE catalytic center. Required for the generation of functional messenger ribonucleoproteins (mRNPs). The sequence is that of THO complex subunit 3 (THO3) from Arabidopsis thaliana (Mouse-ear cress).